A 355-amino-acid chain; its full sequence is MEEGERSPLLSQETAGQKPLSVHRPPTSGCLGPVPREDQAEAWGCSCCPPETKHQALSGTPKKGPAPSLSPGSSCVKYLIFLSNFPFSLLGLLALAIGLWGLAVKGSLGSDLGGPLPTDPMLGLALGGLVVSAASLAGCLGALCENTCLLRGFSGGILAFLVLEAVAGALVVALWGPLQDSLEHTLRVAIAHYQDDPDLRFLLDQVQLGLRCCGAASYQDWQQNLYFNCSSPGVQACSLPASCCIDPREDGASVNDQCGFGVLRLDADAAQRVVYLEGCGPPLRRWLRANLAASGGYAIAVVLLQGAELLLAARLLGALAARSGAAYGPGAHGEDRAGPQSPSPGAPPAAKPARG.

Positions 1–33 are disordered; it reads MEEGERSPLLSQETAGQKPLSVHRPPTSGCLGP. The Cytoplasmic portion of the chain corresponds to 1–78; it reads MEEGERSPLL…LSPGSSCVKY (78 aa). The helical transmembrane segment at 79 to 99 threads the bilayer; that stretch reads LIFLSNFPFSLLGLLALAIGL. Residues 100–120 lie on the Extracellular side of the membrane; that stretch reads WGLAVKGSLGSDLGGPLPTDP. Residues 121–141 form a helical membrane-spanning segment; it reads MLGLALGGLVVSAASLAGCLG. The Cytoplasmic portion of the chain corresponds to 142 to 154; it reads ALCENTCLLRGFS. A helical membrane pass occupies residues 155-175; that stretch reads GGILAFLVLEAVAGALVVALW. Topologically, residues 176-355 are extracellular; the sequence is GPLQDSLEHT…APPAAKPARG (180 aa). 4 disulfides stabilise this stretch: C212/C279, C213/C243, C229/C237, and C244/C258. Residue N228 is glycosylated (N-linked (GlcNAc...) asparagine). The segment at 327 to 355 is disordered; sequence YGPGAHGEDRAGPQSPSPGAPPAAKPARG. Over residues 341-355 the composition is skewed to pro residues; it reads SPSPGAPPAAKPARG.

The protein belongs to the tetraspanin (TM4SF) family. Interacts with ADAM10. In terms of tissue distribution, expressed in the eye, including iris, ciliary body, retinal pigment epithelium, but not lens (protein level).

It localises to the cell membrane. Part of TspanC8 subgroup, composed of 6 members that interact with the transmembrane metalloprotease ADAM10. This interaction is required for ADAM10 exit from the endoplasmic reticulum and for enzymatic maturation and trafficking to the cell surface as well as substrate specificity. Different TspanC8/ADAM10 complexes have distinct substrates. This is Tetraspanin-10 from Homo sapiens (Human).